The chain runs to 223 residues: Noggin (223 aa).

Residues 1–26 form the signal peptide; that stretch reads MDHSQCLVTIYAAAVLLGLRLQQGSC. N61 is a glycosylation site (N-linked (GlcNAc...) asparagine). Cystine bridges form between C146–C183, C169–C219, C175–C221, and C198–C206.

The protein belongs to the noggin family. Homodimer.

Its subcellular location is the secreted. Its function is as follows. Inhibitor of bone morphogenetic proteins (BMP) signaling. Controls somitogenesis by sequestering the BMP-4 activity which in turn differentiates distinct subtypes of the mesoderm along the mediolateral axis. The polypeptide is Noggin (NOG) (Gallus gallus (Chicken)).